Consider the following 252-residue polypeptide: uncharacterized protein (252 aa).

This sequence belongs to the LarE family.

This is an uncharacterized protein from Methanocaldococcus jannaschii (strain ATCC 43067 / DSM 2661 / JAL-1 / JCM 10045 / NBRC 100440) (Methanococcus jannaschii).